The following is a 350-amino-acid chain: MAFHGKDDVLDIKAQAHVWKIIYGFADSLVLRCAVELGIVDIIDNNNQPMALADLASKLPVSDVNCDNLYRILRYLVKMEILRVEKSDDGQKKYALEPIATLLSRNAKRSMVPMILGMTQKDFMTPWHSMKDGLSDNGTAFEKAMGMTIWEYLEGHPDQSQLFNEGMAGETRLLTSSLISGSRDMFQGIDSLVDVGGGNGTTVKAISDAFPHIKCTLFDLPHVIANSYDLPNIERIGGDMFKSVPSAQAIILKLILHDWNDEDSIKILKQCRNAVPKDGGKVIIVDVALDEESDHELSSTRLILDIDMLVNTGGKERTKEVWEKIVKSAGFSGCKIRHIAAIQSVIEVFP.

Residues Gly-196, Asp-219, Asp-239, Met-240, and Lys-253 each coordinate S-adenosyl-L-methionine. His-257 functions as the Proton acceptor in the catalytic mechanism.

This sequence belongs to the class I-like SAM-binding methyltransferase superfamily. Cation-independent O-methyltransferase family. COMT subfamily. Homodimer.

It carries out the reaction (S)-3'-hydroxy-N-methylcoclaurine + S-adenosyl-L-methionine = (S)-reticuline + S-adenosyl-L-homocysteine + H(+). It participates in alkaloid biosynthesis; (S)-reticuline biosynthesis; (S)-reticuline from (S)-norcoclaurine: step 4/4. Functionally, catalyzes the transfer of the methyl group to the 4'-hydroxyl group of 3'-hydroxy-N-methylcoclaurine to form reticuline. The polypeptide is 3'-hydroxy-N-methyl-(S)-coclaurine 4'-O-methyltransferase (Coptis japonica (Japanese goldthread)).